The sequence spans 500 residues: Cytochrome P450 2D4 (500 aa).

Cys-446 serves as a coordination point for heme.

Belongs to the cytochrome P450 family. The cofactor is heme. As to expression, brain.

The protein resides in the endoplasmic reticulum membrane. Its subcellular location is the microsome membrane. The catalysed reaction is an organic molecule + reduced [NADPH--hemoprotein reductase] + O2 = an alcohol + oxidized [NADPH--hemoprotein reductase] + H2O + H(+). Its function is as follows. Cytochromes P450 are a group of heme-thiolate monooxygenases. In liver microsomes, this enzyme is involved in an NADPH-dependent electron transport pathway. It oxidizes a variety of structurally unrelated compounds, including steroids, fatty acids, and xenobiotics. In Rattus norvegicus (Rat), this protein is Cytochrome P450 2D4 (Cyp2d4).